A 458-amino-acid chain; its full sequence is ATP synthase subunit beta (458 aa).

148-155 (GGAGVGKT) provides a ligand contact to ATP.

Belongs to the ATPase alpha/beta chains family. As to quaternary structure, F-type ATPases have 2 components, CF(1) - the catalytic core - and CF(0) - the membrane proton channel. CF(1) has five subunits: alpha(3), beta(3), gamma(1), delta(1), epsilon(1). CF(0) has three main subunits: a(1), b(2) and c(9-12). The alpha and beta chains form an alternating ring which encloses part of the gamma chain. CF(1) is attached to CF(0) by a central stalk formed by the gamma and epsilon chains, while a peripheral stalk is formed by the delta and b chains.

It localises to the cell inner membrane. The enzyme catalyses ATP + H2O + 4 H(+)(in) = ADP + phosphate + 5 H(+)(out). Produces ATP from ADP in the presence of a proton gradient across the membrane. The catalytic sites are hosted primarily by the beta subunits. The sequence is that of ATP synthase subunit beta from Mannheimia succiniciproducens (strain KCTC 0769BP / MBEL55E).